The primary structure comprises 1010 residues: Polyhomeotic-like protein 1 (1010 aa).

The span at 1 to 22 (METESEQNSSSTNGSSSSGASS) shows a compositional bias: low complexity. 6 disordered regions span residues 1-25 (METE…SRPQ), 212-243 (NQQA…LSQT), 259-312 (GQSL…TGVV), 444-506 (QQQG…SKPP), 565-588 (GAVQ…PGAL), and 646-678 (KRKA…SPKV). Residues 212–228 (NQQASAQGPQMPGSTQK) show a composition bias toward polar residues. Residues 279-292 (MGPGGGGQAPGGLG) are compositionally biased toward gly residues. Residues 453–463 (PQPPQVPPTQQ) are compositionally biased toward pro residues. A compositionally biased stretch (low complexity) spans 464–480 (VPPSQSQQQAQTLVVQP). Residues 488–500 (TLPPEPTSKPPIP) show a composition bias toward pro residues. Positions 575–587 (ASSPPSSQAAPGA) are enriched in low complexity. S651 is subject to Phosphoserine. A Glycyl lysine isopeptide (Lys-Gly) (interchain with G-Cter in SUMO2) cross-link involves residue K769. A disordered region spans residues 772-794 (QAGLPTGLNESQPSGPLGGDSPS). An FCS-type zinc finger spans residues 797–831 (LEKKANLLKCEYCGKYAPAEQFRGSKRFCSMTCAK). Residues C806, C809, C825, and C829 each contribute to the Zn(2+) site. The tract at residues 854 to 928 (ASYARVRRRG…LGNTITTPST (75 aa)) is disordered. At S904 the chain carries Phosphoserine. T928 carries the phosphothreonine modification. Positions 946-1010 (WSVEEVYEFI…CAKINVLKET (65 aa)) constitute an SAM domain.

Homodimer. Component of a PRC1-like complex. Interacts with the SAM domain of SCMH1 via its SAM domain in vitro. Interacts with RNF2 and CBX7. Interacts with PHC2. Interacts with BMI1. In terms of tissue distribution, highly expressed in testis with lower levels in most other tissues. Expressed in embryonic stem cells.

Its subcellular location is the nucleus. Its function is as follows. Component of a Polycomb group (PcG) multiprotein PRC1-like complex, a complex class required to maintain the transcriptionally repressive state of many genes, including Hox genes, throughout development. PcG PRC1 complex acts via chromatin remodeling and modification of histones; it mediates monoubiquitination of histone H2A 'Lys-119', rendering chromatin heritably changed in its expressibility. Required for proper control of cellular levels of GMNN expression. The polypeptide is Polyhomeotic-like protein 1 (Mus musculus (Mouse)).